The following is a 306-amino-acid chain: 4-diphosphocytidyl-2-C-methyl-D-erythritol kinase (306 aa).

Residue lysine 23 is part of the active site. 108 to 118 (PIAAGIGGGSA) contributes to the ATP binding site. Aspartate 150 is a catalytic residue.

This sequence belongs to the GHMP kinase family. IspE subfamily.

The enzyme catalyses 4-CDP-2-C-methyl-D-erythritol + ATP = 4-CDP-2-C-methyl-D-erythritol 2-phosphate + ADP + H(+). It participates in isoprenoid biosynthesis; isopentenyl diphosphate biosynthesis via DXP pathway; isopentenyl diphosphate from 1-deoxy-D-xylulose 5-phosphate: step 3/6. In terms of biological role, catalyzes the phosphorylation of the position 2 hydroxy group of 4-diphosphocytidyl-2C-methyl-D-erythritol. This is 4-diphosphocytidyl-2-C-methyl-D-erythritol kinase from Rhodopseudomonas palustris (strain BisB18).